The chain runs to 436 residues: GTPase Der (436 aa).

2 EngA-type G domains span residues 3-168 (PLIA…PESD) and 177-352 (IRLA…QNRS). Residues 9-16 (GRPNVGKS), 56-60 (DTGGY), 120-123 (NKAE), 183-190 (GRPNVGKS), 230-234 (DTAGL), and 295-298 (NKWD) each bind GTP. One can recognise a KH-like domain in the interval 353 to 436 (RKISTSALNR…VTISLRFMQK (84 aa)).

This sequence belongs to the TRAFAC class TrmE-Era-EngA-EngB-Septin-like GTPase superfamily. EngA (Der) GTPase family. As to quaternary structure, associates with the 50S ribosomal subunit.

In terms of biological role, GTPase that plays an essential role in the late steps of ribosome biogenesis. This Chlorobium luteolum (strain DSM 273 / BCRC 81028 / 2530) (Pelodictyon luteolum) protein is GTPase Der.